Here is a 146-residue protein sequence, read N- to C-terminus: VHLTAEEKNAITSLWGKVAIEQTGGEALGRLLIVYPWTSRFFDHFGDLSNAKAVMGNPKVLAHGAKVLVAFGDAIKNLDNLKGTFAKLSELHCDKLHVDPENFKLLGNIIVICLAEHFGKEFTIDTQVAWQKLVAGVANALAHKYH.

N-acetylvaline is present on Val1. A Globin domain is found at 2–146 (HLTAEEKNAI…VANALAHKYH (145 aa)). Position 12 is a phosphothreonine (Thr12). At Lys59 the chain carries N6-acetyllysine. His63 is a heme b binding site. N6-acetyllysine is present on Lys82. A heme b-binding site is contributed by His92. Cys93 is modified (S-nitrosocysteine). The residue at position 144 (Lys144) is an N6-acetyllysine.

This sequence belongs to the globin family. In terms of assembly, heterotetramer of two alpha chains and two beta chains. As to expression, red blood cells.

Functionally, involved in oxygen transport from the lung to the various peripheral tissues. The polypeptide is Hemoglobin subunit beta (HBB) (Osphranter rufus (Red kangaroo)).